Consider the following 62-residue polypeptide: MARKCLLVKSFIKKPKYSTRNKSRCPLCGRPRGYIRQFGMCRICFREKALRGEIPGVRKASW.

Residues Cys-25, Cys-28, Cys-41, and Cys-44 each contribute to the Zn(2+) site.

Belongs to the universal ribosomal protein uS14 family. Zinc-binding uS14 subfamily. As to quaternary structure, part of the 30S ribosomal subunit. Contacts proteins S3 and S10. Zn(2+) serves as cofactor.

Its function is as follows. Binds 16S rRNA, required for the assembly of 30S particles and may also be responsible for determining the conformation of the 16S rRNA at the A site. This Sulfurihydrogenibium sp. (strain YO3AOP1) protein is Small ribosomal subunit protein uS14.